The following is a 277-amino-acid chain: Acetyl-coenzyme A carboxylase carboxyl transferase subunit beta (277 aa).

Residues Leu-22–Thr-277 enclose the CoA carboxyltransferase N-terminal domain. Positions 26, 29, 45, and 48 each coordinate Zn(2+). A C4-type zinc finger spans residues Cys-26–Cys-48.

It belongs to the AccD/PCCB family. Acetyl-CoA carboxylase is a heterohexamer composed of biotin carboxyl carrier protein (AccB), biotin carboxylase (AccC) and two subunits each of ACCase subunit alpha (AccA) and ACCase subunit beta (AccD). Requires Zn(2+) as cofactor.

The protein localises to the cytoplasm. It catalyses the reaction N(6)-carboxybiotinyl-L-lysyl-[protein] + acetyl-CoA = N(6)-biotinyl-L-lysyl-[protein] + malonyl-CoA. It functions in the pathway lipid metabolism; malonyl-CoA biosynthesis; malonyl-CoA from acetyl-CoA: step 1/1. Component of the acetyl coenzyme A carboxylase (ACC) complex. Biotin carboxylase (BC) catalyzes the carboxylation of biotin on its carrier protein (BCCP) and then the CO(2) group is transferred by the transcarboxylase to acetyl-CoA to form malonyl-CoA. In Methylacidiphilum infernorum (isolate V4) (Methylokorus infernorum (strain V4)), this protein is Acetyl-coenzyme A carboxylase carboxyl transferase subunit beta.